The following is a 525-amino-acid chain: GMP synthase [glutamine-hydrolyzing] (525 aa).

The 199-residue stretch at 9–207 (RILILDFGSQ…VQDICGCEAL (199 aa)) folds into the Glutamine amidotransferase type-1 domain. The active-site Nucleophile is Cys-86. Active-site residues include His-181 and Glu-183. The GMPS ATP-PPase domain maps to 208–400 (WTPSNIVEDA…LGLPYDMVYR (193 aa)). 235-241 (SGGVDSS) provides a ligand contact to ATP.

Homodimer.

It carries out the reaction XMP + L-glutamine + ATP + H2O = GMP + L-glutamate + AMP + diphosphate + 2 H(+). The protein operates within purine metabolism; GMP biosynthesis; GMP from XMP (L-Gln route): step 1/1. In terms of biological role, catalyzes the synthesis of GMP from XMP. The sequence is that of GMP synthase [glutamine-hydrolyzing] from Pseudomonas putida (strain W619).